The following is a 325-amino-acid chain: N-acetyl-gamma-glutamyl-phosphate reductase (325 aa).

The active site involves C135.

This sequence belongs to the NAGSA dehydrogenase family. Type 1 subfamily.

It is found in the cytoplasm. The catalysed reaction is N-acetyl-L-glutamate 5-semialdehyde + phosphate + NADP(+) = N-acetyl-L-glutamyl 5-phosphate + NADPH + H(+). The protein operates within amino-acid biosynthesis; L-arginine biosynthesis; N(2)-acetyl-L-ornithine from L-glutamate: step 3/4. Functionally, catalyzes the NADPH-dependent reduction of N-acetyl-5-glutamyl phosphate to yield N-acetyl-L-glutamate 5-semialdehyde. The chain is N-acetyl-gamma-glutamyl-phosphate reductase from Flavobacterium johnsoniae (strain ATCC 17061 / DSM 2064 / JCM 8514 / BCRC 14874 / CCUG 350202 / NBRC 14942 / NCIMB 11054 / UW101) (Cytophaga johnsonae).